Reading from the N-terminus, the 317-residue chain is Serpentine receptor class delta-47 (317 aa).

The next 7 membrane-spanning stretches (helical) occupy residues 8 to 28, 42 to 62, 89 to 109, 128 to 148, 185 to 205, 239 to 259, and 270 to 290; these read IFYP…FVVV, VLFC…LLQL, CLYF…LLTI, IVII…IYSV, YLII…GLYT, ACLP…VIGT, and ISVL…YSVA.

The protein belongs to the nematode receptor-like protein srd family.

It is found in the membrane. This is Serpentine receptor class delta-47 (srd-47) from Caenorhabditis elegans.